A 148-amino-acid polypeptide reads, in one-letter code: Ubiquitin-conjugating enzyme E2 30 (148 aa).

A UBC core domain is found at 1–147 (MASKRINKEL…AQSWTQKYAM (147 aa)). Cys-85 acts as the Glycyl thioester intermediate in catalysis.

The protein belongs to the ubiquitin-conjugating enzyme family. In terms of assembly, interacts with RGLG3 and RGLG4. As to expression, ubiquitously expressed at very low levels.

It catalyses the reaction S-ubiquitinyl-[E1 ubiquitin-activating enzyme]-L-cysteine + [E2 ubiquitin-conjugating enzyme]-L-cysteine = [E1 ubiquitin-activating enzyme]-L-cysteine + S-ubiquitinyl-[E2 ubiquitin-conjugating enzyme]-L-cysteine.. It participates in protein modification; protein ubiquitination. Its function is as follows. Accepts the ubiquitin from the E1 complex and catalyzes its covalent attachment to other proteins. This Arabidopsis thaliana (Mouse-ear cress) protein is Ubiquitin-conjugating enzyme E2 30 (UBC30).